The chain runs to 433 residues: Chaperone SurA (433 aa).

Residues 1 to 24 (MKYRIKALLLASSLIITTITSVQA) form the signal peptide. 2 consecutive PpiC domains span residues 175–276 (NVEY…KVLD) and 285–384 (VEEV…KLED).

It is found in the periplasm. The catalysed reaction is [protein]-peptidylproline (omega=180) = [protein]-peptidylproline (omega=0). Chaperone involved in the correct folding and assembly of outer membrane proteins. Recognizes specific patterns of aromatic residues and the orientation of their side chains, which are found more frequently in integral outer membrane proteins. May act in both early periplasmic and late outer membrane-associated steps of protein maturation. The polypeptide is Chaperone SurA (Colwellia psychrerythraea (strain 34H / ATCC BAA-681) (Vibrio psychroerythus)).